A 420-amino-acid chain; its full sequence is Methyltransferase/ribosomally synthesized cyclic peptide gymnopeptides precursor gymMA1 (420 aa).

The interval methionine 1–lysine 251 is methyltransferase domain. Catalysis depends on residues arginine 72, tyrosine 76, and tyrosine 98. 8 residues coordinate S-adenosyl-L-methionine: tyrosine 98, histidine 100, valine 103, alanine 130, glutamine 172, alanine 213, serine 244, and threonine 245. The clasp domain stretch occupies residues glutamate 252–methionine 378. The tract at residues proline 379 to proline 392 is precursor leader. 2 positions are modified to N-methylvaline: valine 394 and valine 396. The residue at position 398 (glycine 398) is an N-methylglycine. Position 399 is an N-methylvaline (valine 399). The residue at position 400 (alanine 400) is an N-methylalanine. The residue at position 402 (glycine 402) is an N-methylglycine. Residues valine 404, valine 406, valine 408, and valine 410 each carry the N-methylvaline modification.

In the N-terminal section; belongs to the precorrin methyltransferase family. In terms of assembly, homodimer. Post-translationally, gymMA1 automethylates at Val-394, Val-396, Gly-398, Val-399, Ala-400, Gly-402, Val-404, Val-406, Val-408 and Val-410 before being processed by a prolyloligopeptidase which likely forms a peptidyl ester upon removal of the follower propeptide, which then undergoes macrocyclization with the N-terminus of the modified core peptide. Peptide backbone alpha-N-methylations change the physicochemical properties of amide bonds to provide structural constraints and other favorable characteristics including biological membrane permeability to peptides.

Its pathway is mycotoxin biosynthesis. Functionally, fusion protein of the methyltransferase gymM1 and the gymnopeptides precursor; part of the gene cluster that mediates the biosynthesis of gymnopeptides, highly methylated cyclic octadecapeptides with striking antiproliferative activity on several human cancer cell lines. Gymnopeptides derive from the C-terminus of the gymMA1 protein, and it is the gymMA1 protein that methylates its own C-terminus using S-adenosyl methionine (SAM). The C-terminus is subsequently cleaved off and macrocyclized by a prolyloligopeptidase to give the final product. The sequence is that of Methyltransferase/ribosomally synthesized cyclic peptide gymnopeptides precursor gymMA1 from Gymnopus fusipes (Spindle toughshank).